The following is a 364-amino-acid chain: Long-wave-sensitive opsin 1 (364 aa).

Residues 1–23 (MAQQWSLQRLAGRHPQDSYEDST) form a disordered region. Residues 1-52 (MAQQWSLQRLAGRHPQDSYEDSTQSSIFTYTNSNSTRGPFEGPNYHIAPRWV) lie on the Extracellular side of the membrane. The O-linked (GlcNAc) serine glycan is linked to S22. Residue N34 is glycosylated (N-linked (GlcNAc...) asparagine). The helical transmembrane segment at 53 to 77 (YHLTSVWMIFVVTASVFTNGLVLAA) threads the bilayer. Residues 78–89 (TMKFKKLRHPLN) lie on the Cytoplasmic side of the membrane. Residues 90–115 (WILVNLAVADLAETVIASTISIVNQV) traverse the membrane as a helical segment. Over 116 to 129 (SGYFVLGHPMCVLE) the chain is Extracellular. The cysteines at positions 126 and 203 are disulfide-linked. Residues 130–149 (GYTVSLCGITGLWSLAIISW) form a helical membrane-spanning segment. Topologically, residues 150-168 (ERWMVVCKPFGNVRFDAKL) are cytoplasmic. Residues 169–192 (AIVGIAFSWIWAAVWTAPPIFGWS) traverse the membrane as a helical segment. The Extracellular segment spans residues 193–218 (RYWPHGLKTSCGPDVFSGSSYPGVQS). A helical transmembrane segment spans residues 219-246 (YMIVLMVTCCIIPLAIIMLCYLQVWLAI). The Cytoplasmic segment spans residues 247-268 (RAVAKQQKESESTQKAEKEVTR). A helical transmembrane segment spans residues 269–292 (MVVVMIFAYCVCWGPYTFFACFAA). Over 293–300 (ANPGYAFH) the chain is Extracellular. Residues 301–325 (PLMAALPAYFAKSATIYNPVIYVFM) traverse the membrane as a helical segment. At K312 the chain carries N6-(retinylidene)lysine. Over 326–364 (NRQFRNCILQLFGKKVDDGSELSSASKTEVSSVSSVSPA) the chain is Cytoplasmic.

Belongs to the G-protein coupled receptor 1 family. Opsin subfamily. Phosphorylated on some or all of the serine and threonine residues present in the C-terminal region. As to expression, the three color pigments are found in the cone photoreceptor cells.

The protein localises to the membrane. Functionally, visual pigments are the light-absorbing molecules that mediate vision. They consist of an apoprotein, opsin, covalently linked to cis-retinal. In Homo sapiens (Human), this protein is Long-wave-sensitive opsin 1 (OPN1LW).